We begin with the raw amino-acid sequence, 199 residues long: Outer dense fiber protein 4 (199 aa).

Residues 1–14 (MNIRSLERAGRAGK) show a composition bias toward basic and acidic residues. Residues 1–25 (MNIRSLERAGRAGKQDGVAVSPGQE) are disordered. At Ser-53 the chain carries Phosphoserine. 3 helical membrane-spanning segments follow: residues 68–88 (IAQVLASELSLLAFILLVVMV), 109–128 (VTTKIYTSVHIMSLGLLHIY), and 159–179 (LALGLGIILTIWLHLPYIPGL).

It is found in the membrane. Functionally, component of the outer dense fibers (ODF) of spermatozoa which could be involved in sperm tail structure, sperm movement and general organization of cellular cytoskeleton. The protein is Outer dense fiber protein 4 (ODF4) of Bos taurus (Bovine).